The sequence spans 180 residues: Oligoribonuclease (180 aa).

One can recognise an Exonuclease domain in the interval 7-170; it reads LIWIDLEMTG…DDIRESIAEL (164 aa). Tyr128 is a catalytic residue.

This sequence belongs to the oligoribonuclease family.

The protein resides in the cytoplasm. Functionally, 3'-to-5' exoribonuclease specific for small oligoribonucleotides. This chain is Oligoribonuclease, found in Pseudomonas entomophila (strain L48).